An 8525-amino-acid chain; its full sequence is Nebulin (8525 aa).

Residues 34–70 (TTTTRTSDYEQSETSKPALAQPALAQPASAKPVERRK) form a disordered region. A compositionally biased stretch (low complexity) spans 48–64 (SKPALAQPALAQPASAK). Nebulin repeat units follow at residues 83–110 (TPYIAHSQKMQDLFSPNKYKEKFEKTKG), 112–146 (PYASTTDTPELRRIKKVQDQLSEVKYRMDGDVAKT), 156–181 (DIEHAKKVSQQVSKVLYKQNWEDTKD), 182–216 (KYLLPPDAPELVQAVKNTAMFSKKLYTEDWEADKS), 217–251 (LFYPYNDSPELRRVAQAQKALSDVAYKKGLAEQQA), 252–286 (QFTPLADPPDIEFAKKVTNQVSKQKYKEDYENKIK), 296–321 (EVANARMNADNISTRKYQEDFENMKD), 323–357 (IYFMQTETPEYKMNKKAGVAASKVKYKEDYEKNKG), 362–396 (NVLPASENPQLRQLKAAGDALSDKLYKENYEKTKA), 403–431 (ETPKFKLDTVLQNFSSDKKYKDSYLKDIL), 433–467 (HYVGSFEDPYHSHCMKVTAQNSDKNYKAEYEEDRG), 501–535 (KFTQVTDSPVLLQAQVNSKQLSDLNYKAKHESEKF), 536–570 (KCHIPPDTPAFIQHKVNAYNLSDNLYKQDWEKSKA), 572–606 (KFDIKVDAIPLLAAKANTKNTSDVMYKKDYEKNKG), 610–644 (GVLSINDDPKMLHSLKVAKNQSDRLYKENYEKTKA), 680–714 (HYVGSMEDPYHTHCMKVAAQNSDKSYKAEYEEDKG), 748–782 (KFTAVTDSPVLLQAQLNTKQLSDLNYKAKHEGEKF), 783–817 (KCHIPADAPQFIQHRVNAYNLSDNVYKQDWEKSKA), 819–853 (KFDIKVDAIPLLAAKANTKNTSDVMYKKDYEKSKG), 857–891 (GALSINDDPKMLHSLKTAKNQSDREYRKDYEKSKT), 892–918 (IYTAPLDMLQVTQAKKSQAIASDVDYK), 923–957 (SYSYPPDSINVDLAKKAYALQSDVEYKADYNSWMK), 968–986 (EMEKAKRASDILNEKKYRQ), 992–1026 (KFTSIEDAPITVQSKINQAQRSDIAYKAKGEEIIH), 1027–1061 (KYNLPPDLPQFIQAKVNAYNISENMYKADLKDLSK), 1063–1097 (GYDLRTDAIPIRAAKAARQAASDVQYKKDYEKAKG), 1101–1135 (GFQSLQDDPKLVHYMNVAKIQSDREYKKDYEKTKS), 1136–1166 (KYNTPHDMFNVVAAKKAQDVVSNVNYKHSLH), 1167–1201 (HYTYLPDAMDLELSKNMMQIQSDNVYKEDYNNWMK), 1212–1230 (DVEKVKKAGDALNEKKYRQ), 1236–1270 (KFTSIVDSPVMVQAKQNTKQVSDILYKAKGEDVKH), 1271–1305 (KYTMSPDLPQFLQAKCNAYNISDVCYKRDWYDLIA), 1307–1341 (GNNVLGDAIPITAAKASRNIASDYKYKEAYEKSKG), 1345–1379 (GFRSLQDDPKLVHYMNVAKLQSDREYKKNYENTKT), 1380–1407 (SYHTPGDMVSITAAKMAQDVATNVNYKQ), 1411–1445 (HYTYLPDAMSLEHTRNVNQIQSDNVYKDEYNSFLK), 1456–1474 (EVEKVKKAGDALNERKYRQ), 1480–1514 (KFTSVPDSMGMVLAQHNTKQLSDLNYKVEGEKLKH), 1515–1549 (KYTIDPELPQFIQAKVNALNMSDAHYKADWKKTIA), 1551–1585 (GYDLRPDAIPIVAAKSSRNIASDCKYKEAYEKAKG), 1589–1623 (GFLSLQDDPKLVHYMNVAKIQSDREYKKGYEASKT), 1624–1654 (KYHTPLDMVSVTAAKKSQEVATNANYRQSYH), 1655–1689 (HYTLLPDALNVEHSRNAMQIQSDNLYKSDFTNWMK), 1697–1725 (ESLEVEKAKKAGEILSEKKYRQHPEKLKF), 1730–1758 (DTMEQALNKSNKLNMDKRLYTEKWNKDKT), 1759–1793 (TIHVMPDTPDILLSRVNQITMSDKLYKAGWEEEKK), 1795–1829 (GYDLRPDAIAIKAARASRDIASDYKYKKAYEQAKG), 1833–1867 (GFRSLEDDPKLVHFMQVAKMQSDREYKKGYEKSKT), 1868–1894 (SFHTPVDMLSVVAAKKSQEVATNANYR), 1899–1933 (TYNMLPDAMSFELAKNMMQIQSDNQYKADYADFMK), 1949–1962 (KKAMEIISEKKYRQ), 1968–2002 (KYSTLMDSMNMVLAQNNAKIMNEHLYKQAWEADKT), 2003–2037 (KVHIMPDIPQIILAKANAINMSDKLYKLSLEESKK), 2039–2073 (GYDLRPDAIPIKAAKASRDIASDYKYKYNYEKGKG), 2077–2111 (GFRSLEDDPKLVHSMQVAKMQSDREYKKNYENTKT), 2112–2138 (SYHTPADMLSVTAAKDAQANITNTNYK), 2143–2177 (KYILLPDAMNIELTRNMNRIQSDNEYKQDYNEWYK), 2188–2206 (EVEKAKKATEYASDQKYRQ), 2212–2246 (QFKKLTDSMDMVLAKQNAHTMNKHLYTIDWNKDKT), 2247–2281 (KIHVMPDTPDILQAKQNQTLYSQKLYKLGWEEALK), 2283–2317 (GYDLPVDAISVQLAKASRDIASDYKYKQGYRKQLG), 2321–2355 (GFRSLQDDPKLVLSMNVAKMQSEREYKKDFEKWKT), 2356–2382 (KFSSPVDMLGVVLAKKCQELVSDVDYK), 2387–2421 (QWTCLPDQNDVVQAKKVYELQSENLYKSDLEWLRG), 2436–2449 (KRASEIISEKKYRQ), 2455–2489 (KFTSIPDAMDIVLAKTNAKNRSDRLYREAWDKDKT), 2490–2524 (QIHIMPDTPDIVLAKANLINTSDKLYRMGYEELKR), 2526–2560 (GYDLPVDAIPIKAAKASREIASEYKYKEGFRKQLG), 2564–2598 (GARNIEDDPKMMWSMHVAKIQSDREYKKDFEKWKT), 2599–2625 (KFSSPVDMLGVVLAKKCQTLVSDVDYK), 2630–2664 (QWTCLPDQSDVIHARQAYDLQSDNLYKSDLQWLKG), 2679–2692 (KRATQILSDHVYRQ), 2698–2732 (KFSSLMDSIPMVLAKNNAITMNHRLYTEAWDKDKT), 2733–2767 (TVHIMPDTPEVLLAKQNKVNYSEKLYKLGLEEAKR), 2769–2803 (GYDMRVDAIPIKAAKASRDIASEFKYKEGYRKQLG), 2807–2841 (GARAIRDDPKMMWSMHVAKIQSDREYKKDFEKWKT), 2842–2868 (KFSSPVDMLGVVLAKKCQTLVSDVDYK), 2873–2907 (QWTCLPDQSDVIHARQAYDLQSDNMYKSDLQWMRG), 2917–2935 (DVEKCKRATEILSDKIYRQ), 2941–2975 (KFTSVTDSLEQVLAKNNAITMNKRLYTEAWDKDKT), 2976–3010 (QIHIMPDTPEIMLARMNKINYSESLYKLANEEAKK), 3012–3046 (GYDLRSDAIPIVAAKASRDIISDYKYKDGYCKQLG), 3050–3084 (GARNIEDDPKMMWSMHVAKIQSDREYKKDFEKWKT), 3085–3111 (KFSSPVDMLGVVLAKKCQTLVSDVDYK), 3116–3150 (EWTCLPDQSDVIHARQAYDLQSDNIYKSDLQWLRG), 3158–3178 (SMDVVKCKRATEILSDNIYRQ), 3184–3218 (KFTSVTDSLEQVLAKNNALNMNKRLYTEAWDKDKT), 3219–3253 (QIHIMPDTPEIMLARQNKINYSETLYKLANEEAKK), 3255–3289 (GYDLRSDAIPIVAAKASRDVISDYKYKDGYRKQLG), 3293–3327 (GARNIEDDPKMMWSMHVAKIQSDREYKKDFEKWKT), 3328–3354 (KFSSPVDMLGVVLAKKCQTLVSDVDYK), 3359–3393 (EWTCLPDQNDVIHARQAYDLQSDNIYKSDLQWLRG), 3401–3421 (SMDVVKCKRAAEILSDNIYRQ), 3427–3461 (KFTSVTDSLEQVLAKNNALNMNKRLYTEAWDKDKT), 3462–3496 (QVHIMPDTPEIMLARQNKINYSESLYRQAMEEAKK), 3498–3532 (GYDLRSDAIPIVAAKASRDIASDYKYKEAYRKQLG), 3536–3570 (GARAVHDDPKIMWSLHIAKVQSDREYKKDFEKYKT), 3571–3597 (RYSSPVDMLGIVLAKKCQTLVSDVDYK), 3602–3636 (EWICLPDQNDIIHARKAYDLQSDNLYKSDLEWMKG), 3643–3664 (DSLEVVRAKRAGELLSDTIYRQ), 3670–3704 (KFTSITDTPEQVLAKNNALNMNKRLYTEAWDNDKK), 3705–3739 (TIHVMPDTPEIMLAKLNRINYSDKLYKLALEESKK), 3741–3775 (GYDLRLDAIPIQAAKASRDIASDYKYKEGYRKQLG), 3779–3813 (GARNIKDDPKMMWSIHVAKIQSDREYKKEFEKWKT), 3814–3840 (KFSSPVDMLGVVLAKKCQILVSDIDYK), 3845–3879 (EWTCLPDQNDVIQARKAYDLQSDAIYKSDLEWLRG), 3889–3907 (EVEKVKRAGEILSDRKYRQ), 3913–3947 (KFTCITDTPEIVLAKNNALTMSKHLYTEAWDADKT), 3948–3982 (SIHVMPDTPDILLAKSNSANISQKLYTKGWDESKM), 3984–4018 (DYDLRADAISIKSAKASRDIASDYKYKEAYEKQKG), 4022–4056 (GAQSIEDDPKIMCAIHAGKIQSEREYKKEFQKWKT), 4057–4083 (KFSSPVDMLSILLAKKCQTLVTDIDYR), 4088–4122 (EWTCMPDQNDIIQAKKAYDLQSDSVYKADLEWLRG), 4132–4149 (EMNRVKVAQDLVNERLYR), 4156–4190 (SFTSIVDTPEVVLAKANSLQISEKLYQEAWNKDKS), 4191–4225 (NITIPSDTPEMLQAHINALQISNKLYQKDWNDAKQ), 4227–4261 (GYDIRADAIEIKHAKASREIASEYKYKEGYRKQLG), 4265–4299 (GFRTLQDDPKSVWAIHAAKIQSDREYKKAYEKSKG), 4300–4326 (IHNTPLDMMSIVQAKKCQVLVSDIDYR), 4331–4365 (QWTCLPDQNDVIQAKKAYDLQSDNLYKSDLEWLKG), 4375–4392 (EVMRVKNAQNLLNERLYR), 4399–4433 (KFTSIVDTPEVIQAKINAVQISEPLYRDAWEKEKA), 4434–4468 (NVNVPADTPLMLQSKINALQISNKRYQQAWEDVKM), 4470–4504 (GYDLRADAIGIQHAKASRDIASDYLYKTAYEKQKG), 4508–4542 (GCRSAKEDPKLVWAANVLKMQNDRLYKKAYNDHKA), 4543–4569 (KISIPVDMVSISAAKEGQALASDVDYR), 4574–4608 (HWSCFPDQNDVIQARKAYDLQSDSVYKADLEWLRG), 4618–4635 (EMNRVKVAQDLVNERLYR), 4642–4676 (SFTSIVDTPEVVLAKANSLQISEKLYQEAWNKDKS), 4677–4711 (NITIPSDTPEMLQAHINALQISNKLYQKDWNDTKQ), 4713–4747 (GYDIRADAIEIKHAKASREIASEYKYKEGYRKQLG), 4751–4785 (GFRTLQDDPKSVWAIHAAKIQSDREYKKAYEKSKG), 4786–4812 (IHNTPLDMMSIVQAKKCQVLVSDIDYR), 4817–4851 (QWTCLPDQNDVIQAKKAYDLQSDNLYKSDLEWLKG), 4861–4878 (EVMRVKNAQNLLNERLYR), 4885–4919 (KFTSIVDTPEVIQAKINAVQISEPLYRNAWEKEKA), 4920–4954 (NVNVPADTPLMLQSKINALQISNKRYQQAWEDVKM), 4956–4990 (GYDLRADAIGIQHAKASRDIASDYLYKTAYEKQKG), 4994–5028 (GCRSAKEDPKLVWAANVLKMQNDRLYKKAYNDHKA), 5029–5055 (KISIPVDMVSISAAKEGQALASDVDYR), 5060–5094 (HWSCFPDQNDVIQARKAYDLQSDSVYKADLEWLRG), 5104–5121 (EMNRVKVAQDLVNERLYR), 5128–5162 (SFTSIVDTPEVVLAKANSLQISEKLYQEAWNKDKS), 5163–5197 (NITIPSDTPEMLQAHINALQISNKLYQKDWNDTKQ), 5199–5233 (GYDIRADAIEIKHAKASREIASEYKYKEGYRKQLG), 5237–5271 (GFRTLQDDPKSVWAIHAAKIQSDREYKKAYEKSKG), 5272–5298 (IHNTPLDMMSIVQAKKCQVLVSDIDYR), 5303–5337 (QWTCLPDQNDVIQAKKAYDLQSDNLYKSDLEWLKG), 5347–5364 (EVMRVKNAQNLLNERLYR), 5371–5405 (KFTSIVDTPEVIQAKINAVQISEPLYRDAWEKEKA), 5406–5440 (NVNVPADTPLMLQSKINALQISNKRYQQAWEDVKM), 5442–5476 (GYDLRADAIGIQHAKASRDIASDYLYKTAYEKQKG), 5480–5514 (GCRSAKEDPKLVWAANVLKMQNDRLYKKAYNDHKA), 5515–5541 (KISIPVDMVSISAAKEGQALASDVDYR), 5546–5580 (RWSCFPDQNDVIQARKAYDLQSDALYKADLEWLRG), 5588–5607 (SPEVLRVKNAQNIFCDSVYR), 5614–5648 (KYTSIVDTPEVVLAKSNAENISIPKYREVWDKDKT), 5649–5683 (SIHIMPDTPEINLARANALNVSNKLYREGWDEMKA), 5690–5718 (DAIPIQAAKASREIASDYKYKLDHEKQKG), 5722–5756 (GTLTARDDNKIRWALIADKLQNEREYRLDWAKWKA), 5757–5783 (KIQSPVDMLSILHSKNSQALVSDMDYR), 5788–5822 (QWTCMPDQNDVIQAKKAYELQSDNVYKADLEWLRG), 5829–5853 (DSVSVNHAKHAADIFSEKKYRTKIE), 5856–5890 (NFTPVDDRVDYVTAKQSGEILDDIKYRKDWNATKS), 5893–5924 (TLTETPLLHTAQEAARILDQYLYKEGWERQKA), 5926–5960 (GYILPPDAVPFVHAHHCNDVQSELKYKAEHVKQKG), 5964–5998 (GVPTMRDDPKLVWFEHAGQIQNERLYKEDYHKTKA), 5999–6025 (KINIPADMVSVLAAKQGQTLVSDIDYR), 6030–6064 (QWMCHPDQNDVIQARKAYDLQSDNVYRADLEWLRG), 6071–6099 (DSVDHVRVTKNQEMMSQIKYKKNALENYP), 6100–6134 (NFRSVVDPPEIVLAKINSVNQSDVKYKETFNKAKG), 6135–6169 (KYTFSPDTPHISHSKDMGKLYSTILYKGAWEGTKA), 6171–6205 (GYTLDERYIPIVGAKHADLVNSELKYKETYEKQKG), 6209–6243 (AGKVIGEFPGVVHCLDFQKMRSALNYRKHYEDTKA), 6244–6274 (NVHIPNDMMNHVLAKRCQYILSDLEYRHYFH), 6275–6309 (QWTSLLEEPNVIRVRNAQEILSDNVYKDDLNWLKG), 6316–6344 (DTPQILHAKKSYDLQSQLQYTAAGKENLQ), 6345–6379 (NYNLVTDTPLYVTAVQSGINASEVKYKENYHQIKD), 6380–6414 (KYTTVLETVDYDRTRNLKNLYSSNLYKEAWDRVKA), 6416–6450 (SYILPSSTLSLTHAKNQKHLASHIKYREEYEKFKA), 6458–6488 (VDDDPNTARCLRVGKLNIDRLYRSVYEKNKM), 6489–6515 (KIHIVPDMVEMVTAKDSQKKVSEIDYR), 6532–6554 (HVRKVTDQISDIVYKDDLNWLKG), 6561–6589 (DTPEILHAKHAYDLRDDIKYKAHMLKTRN), 6590–6624 (DYKLVTDTPVYVQAVKSGKQLSDAVYHYDYVHSVR), 6626–6660 (KVAPTTKTVDLDRALHAYKLQSSNLYKTSLRTLPT), 6661–6695 (GYRLPGDTPHFKHIKDTRYMSSYFKYKEAYEHTKA), 6697–6731 (GYTLGPKDVPFVHVRRVNNVTSERLYRELYHKLKD), 6732–6766 (KIHTTPDTPEIRQVKKTQEAVSELIYKSDFFKMQG), 6767–6801 (HMISLPYTPQVIHCRYVGDITSDIKYKEDLQVLKG), 6808–6836 (DTPDMVRSRHLRKLWSNYLYTDKARKMRD), 6837–6871 (KYKVVLDTPEYRKVQELKTHLSELVYRAAGKKQKS), 6872–6906 (IFTSVPDTPDLLRAKRGQKLQSQYLYVELATKERP), 6907–6941 (HHHAGNQTTALKHAKDVKDMVSEKKYKIQYEKMKD), 6942–6976 (KYTPVPDTPILIRAKRAYWNASDLRYKETFQKTKG), 6977–7011 (KYHTVKDALDIVYHRKVTDDISKIKYKENYMSQLG), 7012–7046 (IWRSIPDRPEHFHHRAVTDTVSDVKYKEDLTWLKG), 7053–7081 (DTPDFTLAEKNKTLYSKYKYKEVFERTKS), 7082–7110 (DFKYVADSPINRHFKYATQLMNERKYKSS), 7125–7151 (PDMLTALYNSHMWSQIKYRKNYEKSKD), 7152–7186 (KFTSIVDTPEHLRTTKVNKQISDILYKLEYNKAKP), 7188–7222 (GYTTIHDTPMLLHVRKVKDEVSDLKYKEVYQRNKS), 7223–7257 (NCTIEPDAVHIKAAKDAYKVNTNLDYKKQYEANKA), 7258–7292 (HWKWTPDRPDFLQAAKSSLQQSDFEYKLDREFLKG), 7297–7327 (VTDDKNTVLALRNTLIESDLKYKEKHVKERG), 7328–7362 (TCHAVPDTPQILLAKTVSNLVSENKYKDHVKKHLA), 7365–7399 (SYTTLPETRDTVHVKEVTKHVSDTNYKKKFVKEKG), 7402–7433 (NYSIMLEPPEVKHAMEVAKKQSDVAYRKDAKE), 7436–7470 (HYTTVADRPDIKKATQAAKQASEVEYRAKHRKEGS), 7479–7505 (PDIEMAKKAAKLSSQVKYRENFDKEKG), 7514–7542 (DSQLYKVMKDANNLASEVKYKADLKKLHK), 7543–7577 (PVTDMKESLIMNHVLNTSQLASSYQYKKKYEKSKG), 7578–7612 (HYHTIPDNLEQLHLKEATELQSIVKYKEKYEKERG), 7619–7647 (ETPTYITAKESQQMQSGKEYRKDYEESIK), 7650–7684 (NLTGLEVTPALLHVKYATKIASEKEYRKDLEESIR), 7687–7721 (GLTEMEDTPDMLRAKNATQILNEKEYKRDLELEVK), 7731–7759 (ETPDFMRARNATDIASQIKYKQSAEMEKA), 7760–7794 (NFTSVVDTPEIIHAQQVKNLSSQKKYKEDAEKSMS), 7795–7829 (YYETVLDTPEIQRVRENQKNFSLLQYQCDLKNSKG), 7830–7864 (KITVVQDTPEILRVKENQKNFSSVLYKEDVSPGTA), 7867–7888 (KTPEMMRVKQTQDHISSVKYKE), 7892–7921 (QGTPIPDLPEVKRVKETQKHISSVMYKENL), 7930–7957 (TPEIERVKRNQENFSSVLYKENLGKGIP), 7961–7988 (TPEMERVKRNQENFSSILYKENLSKGTP), 7992–8013 (TPEMERVKLNQENFSSVLYKEN), 8016–8045 (KGIPIPITPEMERVKHNQENFSSVLYKENL), 8054–8075 (TPEMQRVKHNQENLSSVLYKEN), 8078–8112 (KGTPLPVTPEMERVKHNQENISSVLYKENMGKGTP), 8116–8143 (TPEMERVKHNQENISSVLYKENMGKGTP), 8147–8168 (TPEMERVKHNQENISSVLYKEN), 8171–8205 (KATATPVTPEMQRVKRNQENISSVLYKENLGKATP), 8209–8232 (TPEMERVKRNQENFSSVLYKENMR), 8233–8267 (KATPTPVTPEMERAKRNQENISSVLYSDSFRKQIQ), 8269–8303 (KAAYVLDTPEMRRVRETQRHISTVKYHEDFEKHKG), and 8304–8330 (CFTPVVTDPITERVKKNMQDFSDINYR). Residues 8313–8468 (ITERVKKNMQ…SIPSHPSTAG (156 aa)) form an interaction with SVIL region. Disordered stretches follow at residues 8385–8422 (QAQRRSREQSRSASALSISGGEEKSEHSEAPDHHLSTY) and 8439–8463 (TTELPQQRSSSVATQQTTVSSIPSH). Basic and acidic residues predominate over residues 8405–8419 (GEEKSEHSEAPDHHL). Residues 8444-8459 (QQRSSSVATQQTTVSS) show a composition bias toward low complexity. The SH3 domain occupies 8466–8525 (TAGKIFRAMYDYMAADADEVSFKDGDAIINVQAIDEGWMYGTVQRTGRTGMLPANYVEAI).

As to quaternary structure, monomer and homooligomer. Interacts with TTN/titin. Interacts with SVIL. Interacts (via nebulin repeats 160-164) with DES. Expressed in skeletal muscle (at protein level). Located in the thin filament of striated muscle.

It localises to the cytoplasm. It is found in the myofibril. Its subcellular location is the sarcomere. The protein resides in the cytoskeleton. Functionally, this giant muscle protein may be involved in maintaining the structural integrity of sarcomeres and the membrane system associated with the myofibrils. Binds and stabilize F-actin. The polypeptide is Nebulin (NEB) (Homo sapiens (Human)).